A 270-amino-acid chain; its full sequence is Cell surface glycoprotein CD200 receptor 4 (270 aa).

Positions 1 to 25 (MHALGRIPTLTLLIFINIFVSGSSC) are cleaved as a signal peptide. The 120-residue stretch at 26–145 (TDENQTIQND…GNLEKVYDLQ (120 aa)) folds into the Ig-like V-type domain. At 26–241 (TDENQTIQND…TMTTPRSLLT (216 aa)) the chain is on the extracellular side. Asn-29 and Asn-44 each carry an N-linked (GlcNAc...) asparagine glycan. 4 disulfides stabilise this stretch: Cys-58–Cys-129, Cys-82–Cys-97, Cys-164–Cys-213, and Cys-183–Cys-201. The 96-residue stretch at 134–229 (PEGNLEKVYD…GNQSLSIELS (96 aa)) folds into the Ig-like C2-type domain. The N-linked (GlcNAc...) asparagine glycan is linked to Asn-192. Residues 242–262 (ILYVKMALLVIILLNVGFAFF) form a helical membrane-spanning segment. Residues 263 to 270 (QKRNFART) lie on the Cytoplasmic side of the membrane.

This sequence belongs to the CD200R family. In terms of assembly, interacts with TYROBP. In terms of tissue distribution, highly expressed in monocytes, NK cells and a subset of NKT cells. Weakly expressed in granulocytes and B-cells (at protein level). Expressed in brain, lung, testis, thymus, intestine and uterus. Expressed in bone marrow derived-macrophage and dendritic cells and mast cells.

It localises to the membrane. Involved in the recruitment or surface expression of the TYROBP receptor. In Mus musculus (Mouse), this protein is Cell surface glycoprotein CD200 receptor 4 (Cd200r4).